The chain runs to 99 residues: NADH-quinone oxidoreductase subunit K (99 aa).

3 helical membrane passes run 3–23 (PINYLYLSALLFTIGAAGVLL), 28–48 (IVMFMCVELMLNAVNLAFVTF), and 59–79 (MIAFFTMVVAACEVVIGLAII).

Belongs to the complex I subunit 4L family. NDH-1 is composed of 14 different subunits. Subunits NuoA, H, J, K, L, M, N constitute the membrane sector of the complex.

Its subcellular location is the cell membrane. The enzyme catalyses a quinone + NADH + 5 H(+)(in) = a quinol + NAD(+) + 4 H(+)(out). Functionally, NDH-1 shuttles electrons from NADH, via FMN and iron-sulfur (Fe-S) centers, to quinones in the respiratory chain. The immediate electron acceptor for the enzyme in this species is believed to be a menaquinone. Couples the redox reaction to proton translocation (for every two electrons transferred, four hydrogen ions are translocated across the cytoplasmic membrane), and thus conserves the redox energy in a proton gradient. The chain is NADH-quinone oxidoreductase subunit K from Mycobacterium avium (strain 104).